The chain runs to 432 residues: 23S rRNA (uracil(1939)-C(5))-methyltransferase RlmD (432 aa).

The region spanning 10–68 (RVTTREIITVTTDGLDAFGQGVARHHGKALFIAGLLPGERAEVVLSEDKKQFARGDVKK) is the TRAM domain. Residues cysteine 81, cysteine 87, cysteine 90, and cysteine 162 each coordinate [4Fe-4S] cluster. S-adenosyl-L-methionine is bound by residues glutamine 265, phenylalanine 294, asparagine 299, glutamate 315, asparagine 342, and aspartate 363. Catalysis depends on cysteine 389, which acts as the Nucleophile.

It belongs to the class I-like SAM-binding methyltransferase superfamily. RNA M5U methyltransferase family. RlmD subfamily.

It carries out the reaction uridine(1939) in 23S rRNA + S-adenosyl-L-methionine = 5-methyluridine(1939) in 23S rRNA + S-adenosyl-L-homocysteine + H(+). In terms of biological role, catalyzes the formation of 5-methyl-uridine at position 1939 (m5U1939) in 23S rRNA. The sequence is that of 23S rRNA (uracil(1939)-C(5))-methyltransferase RlmD from Cronobacter sakazakii (strain ATCC BAA-894) (Enterobacter sakazakii).